The chain runs to 910 residues: Dynein axonemal assembly factor 1 homolog (910 aa).

5 LRR repeats span residues 43 to 64 (GLKC…DHQS), 65 to 86 (QLRC…QHCK), 87 to 108 (QLDT…GSDI), 111 to 132 (VLNT…AELR), and 136 to 157 (FVSV…KVLA). Residues 171–209 (PVVNDIPSYRKTLILECKSLTYLDSRPVFDKDRACAEAW) form the LRRCT domain. Residues 217–230 (ERKEHQRWKKEEQR) show a composition bias toward basic and acidic residues. Disordered regions lie at residues 217–275 (ERKE…GDFE), 297–332 (TKGD…DPTL), 344–399 (SRAC…GSIL), 620–642 (EQVP…PVDQ), 662–682 (QVEV…IPEE), and 855–910 (EELE…QGDH). Polar residues predominate over residues 314-331 (STNSVDYITGSDSNSDPT). The segment covering 380-389 (SLSDSSSSSS) has biased composition (low complexity). Over residues 620–633 (EQVPDEVEANDKAS) the composition is skewed to basic and acidic residues. Over residues 855-865 (EELEELNEEED) the composition is skewed to acidic residues. The segment covering 866–878 (PALKEAGDFKHDE) has biased composition (basic and acidic residues).

Belongs to the DNAAF1 family.

It is found in the cell projection. It localises to the cilium. In terms of biological role, cilium-specific protein required for cilia structures. This is Dynein axonemal assembly factor 1 homolog from Anopheles gambiae (African malaria mosquito).